Reading from the N-terminus, the 159-residue chain is Transcriptional repressor NrdR (159 aa).

A compositionally biased stretch (polar residues) spans 1-11 (MQCPTCQNTDS). Residues 1-21 (MQCPTCQNTDSRVLESRSADS) are disordered. Residues 3 to 34 (CPTCQNTDSRVLESRSADSGKSVRRRRECLNC) fold into a zinc finger. The ATP-cone domain maps to 49–139 (VSVLKKDGGR…VYRKFNGVKD (91 aa)).

It belongs to the NrdR family. The cofactor is Zn(2+).

Its function is as follows. Negatively regulates transcription of bacterial ribonucleotide reductase nrd genes and operons by binding to NrdR-boxes. The polypeptide is Transcriptional repressor NrdR (Prochlorococcus marinus (strain AS9601)).